The following is a 149-amino-acid chain: Large ribosomal subunit protein uL22 (149 aa).

It belongs to the universal ribosomal protein uL22 family. As to quaternary structure, part of the 50S ribosomal subunit.

Functionally, this protein binds specifically to 23S rRNA; its binding is stimulated by other ribosomal proteins, e.g. L4, L17, and L20. It is important during the early stages of 50S assembly. It makes multiple contacts with different domains of the 23S rRNA in the assembled 50S subunit and ribosome. The globular domain of the protein is located near the polypeptide exit tunnel on the outside of the subunit, while an extended beta-hairpin is found that lines the wall of the exit tunnel in the center of the 70S ribosome. The protein is Large ribosomal subunit protein uL22 of Petrotoga mobilis (strain DSM 10674 / SJ95).